A 1363-amino-acid chain; its full sequence is Collagen alpha-2(I) chain (1363 aa).

The first 22 residues, 1–22 (MLSFVDTRILLLLAVTSYLATS), serve as a signal peptide directing secretion. Q23 bears the Pyrrolidone carboxylic acid mark. The propeptide at 23 to 77 (QHLFQASAGRKGPRGDKGPQGERGPPGPPGRDGEDGPPGPPGPPGPPGLGGNFAA) is N-terminal propeptide. The disordered stretch occupies residues 28 to 1110 (ASAGRKGPRG…GPNGGGYEVG (1083 aa)). A compositionally biased stretch (pro residues) spans 59 to 69 (PPGPPGPPGPP). Q78 is subject to Pyrrolidone carboxylic acid. K83 carries the post-translational modification Allysine. The segment covering 88-97 (GPGPMGLMGP) has biased composition (low complexity). Residues 98-110 (RGPPGASGPPGPP) are compositionally biased toward pro residues. Positions 112–128 (FQGVPGEPGEPGQTGPQ) are enriched in low complexity. Residues 140 to 154 (AGEDGHPGKPGRPGE) are compositionally biased toward basic and acidic residues. K176 is subject to 5-hydroxylysine; alternate. K176 carries O-linked (Gal...) hydroxylysine; alternate glycosylation. Low complexity-rich tracts occupy residues 224 to 263 (IGAPGPAGARGSDGSAGPTGPAGPIGAAGPPGFPGAPGAK) and 299 to 320 (PGANGLPGAKGAAGLPGVAGAP). A compositionally biased stretch (pro residues) spans 322–335 (LPGPRGIPGPPGPA). 4-hydroxyproline is present on residues P440 and P443. Low complexity-rich tracts occupy residues 601 to 610 (PAGPIGSRGP) and 674 to 683 (RGLPGAIGAP). Residues 684–699 (GPAGGAGDRGEGGPAG) are compositionally biased toward gly residues. Residues 721 to 736 (PSGFAGPPGAAGQPGA) show a composition bias toward low complexity. Over residues 737–746 (KGERGPKGPK) the composition is skewed to basic and acidic residues. Low complexity-rich tracts occupy residues 748–794 (ETGP…AGRV), 842–875 (AGEKGPSGEAGAAGPPGTPGPQGILGAPGILGLP), 898–931 (VSGPPGARGPSGPVGSPGPNGAPGEAGRDGNPGN), 955–965 (PSGALGAPGPH), and 986–995 (VGPAGAFGPR). Residues 1004-1015 (RGEKGEPGDKGH) are compositionally biased toward basic and acidic residues. Over residues 1036–1049 (QHGDQGPPGNNGPA) the composition is skewed to low complexity. Composition is skewed to pro residues over residues 1051-1060 (PRGPPGPSGP) and 1088-1102 (AGPPGPPGPPGPPGP). A propeptide spans 1118 to 1363 (ADQPSLRPKD…GLHIGPVCFK (246 aa)) (C-terminal propeptide). The Fibrillar collagen NC1 domain maps to 1128-1363 (YEVDATLKTL…GLHIGPVCFK (236 aa)). 3 cysteine pairs are disulfide-bonded: C1158–C1190, C1198–C1361, and C1269–C1314. Residues D1176, N1178, Q1179, C1181, and D1184 each contribute to the Ca(2+) site. N1264 is a glycosylation site (N-linked (GlcNAc...) asparagine).

This sequence belongs to the fibrillar collagen family. As to quaternary structure, trimers of one alpha 2(I) and two alpha 1(I) chains. Post-translationally, prolines at the third position of the tripeptide repeating unit (G-X-Y) are hydroxylated in some or all of the chains. In terms of processing, the N-terminus of the mature protein is blocked. Forms the fibrils of tendon, ligaments and bones. In bones the fibrils are mineralized with calcium hydroxyapatite.

Its subcellular location is the secreted. It is found in the extracellular space. It localises to the extracellular matrix. Its function is as follows. Type I collagen is a member of group I collagen (fibrillar forming collagen). This Gallus gallus (Chicken) protein is Collagen alpha-2(I) chain (COL1A2).